The chain runs to 158 residues: Low molecular weight phosphotyrosine protein phosphatase (158 aa).

The residue at position 2 (Ala-2) is an N-acetylalanine. Cys-13 functions as the Nucleophile in the catalytic mechanism. Arg-19 is an active-site residue. The active-site Proton donor is Asp-130. Residues Tyr-132 and Tyr-133 each carry the phosphotyrosine modification.

The protein belongs to the low molecular weight phosphotyrosine protein phosphatase family. As to quaternary structure, interacts with EPHA2; dephosphorylates EPHA2. Interacts with EPHB1. Interacts with the SH3 domain of SPTAN1. Post-translationally, phosphorylated by LCK. Phosphorylation at Tyr-132 increases its phosphatase activity.

The protein resides in the cytoplasm. It catalyses the reaction O-phospho-L-tyrosyl-[protein] + H2O = L-tyrosyl-[protein] + phosphate. The enzyme catalyses a phosphate monoester + H2O = an alcohol + phosphate. Its activity is regulated as follows. Inhibited by sulfhydryl reagents. Functionally, acts on tyrosine phosphorylated proteins, low-MW aryl phosphates and natural and synthetic acyl phosphates with differences in substrate specificity between isoform 1 and isoform 2. The chain is Low molecular weight phosphotyrosine protein phosphatase (ACP1) from Pongo abelii (Sumatran orangutan).